A 94-amino-acid polypeptide reads, in one-letter code: Defensin-7 (94 aa).

The first 19 residues, 1–19 (MRTLTLLSAFLLVALQAWA), serve as a signal peptide directing secretion. 2 cysteine pairs are disulfide-bonded: cysteine 65/cysteine 93 and cysteine 72/cysteine 92.

This sequence belongs to the alpha-defensin family.

It localises to the secreted. Its function is as follows. Has antimicrobial activity. The chain is Defensin-7 (DEFA7) from Pan troglodytes (Chimpanzee).